Consider the following 243-residue polypeptide: 2-C-methyl-D-erythritol 4-phosphate cytidylyltransferase (243 aa).

This sequence belongs to the IspD/TarI cytidylyltransferase family. IspD subfamily.

The enzyme catalyses 2-C-methyl-D-erythritol 4-phosphate + CTP + H(+) = 4-CDP-2-C-methyl-D-erythritol + diphosphate. Its pathway is isoprenoid biosynthesis; isopentenyl diphosphate biosynthesis via DXP pathway; isopentenyl diphosphate from 1-deoxy-D-xylulose 5-phosphate: step 2/6. Functionally, catalyzes the formation of 4-diphosphocytidyl-2-C-methyl-D-erythritol from CTP and 2-C-methyl-D-erythritol 4-phosphate (MEP). The sequence is that of 2-C-methyl-D-erythritol 4-phosphate cytidylyltransferase from Chlorobium phaeovibrioides (strain DSM 265 / 1930) (Prosthecochloris vibrioformis (strain DSM 265)).